The following is a 136-amino-acid chain: Small ribosomal subunit protein bS6 (136 aa).

A disordered region spans residues 96-136 (VTEPSALARSGSDAEADRAPADEGSVEAAGAEPGSEAEAEA).

This sequence belongs to the bacterial ribosomal protein bS6 family.

In terms of biological role, binds together with bS18 to 16S ribosomal RNA. The polypeptide is Small ribosomal subunit protein bS6 (Methylococcus capsulatus (strain ATCC 33009 / NCIMB 11132 / Bath)).